We begin with the raw amino-acid sequence, 305 residues long: Homoserine O-acetyltransferase (305 aa).

The active-site Acyl-thioester intermediate is C142. K163 and S192 together coordinate substrate. H235 serves as the catalytic Proton acceptor. E237 is an active-site residue. Residue R249 coordinates substrate.

This sequence belongs to the MetA family.

It localises to the cytoplasm. It catalyses the reaction L-homoserine + acetyl-CoA = O-acetyl-L-homoserine + CoA. It participates in amino-acid biosynthesis; L-methionine biosynthesis via de novo pathway; O-acetyl-L-homoserine from L-homoserine: step 1/1. Its function is as follows. Transfers an acetyl group from acetyl-CoA to L-homoserine, forming acetyl-L-homoserine. This chain is Homoserine O-acetyltransferase, found in Cereibacter sphaeroides (strain KD131 / KCTC 12085) (Rhodobacter sphaeroides).